The primary structure comprises 460 residues: Probable carboxypeptidase TRV_02791 (460 aa).

Residues 1–22 form the signal peptide; that stretch reads MQKTYLWALVSLLASSLVDARS. Asn98 carries an N-linked (GlcNAc...) asparagine glycan. Asp175 serves as a coordination point for Zn(2+). Residue Glu207 is the Proton acceptor of the active site. Zn(2+) is bound at residue Glu208. Asn395 is a glycosylation site (N-linked (GlcNAc...) asparagine).

The protein belongs to the peptidase M20A family. The cofactor is Zn(2+).

The protein resides in the secreted. This is Probable carboxypeptidase TRV_02791 from Trichophyton verrucosum (strain HKI 0517).